Reading from the N-terminus, the 335-residue chain is DNA-directed RNA polymerase RPB7 homolog (335 aa).

Belongs to the Asfivirus DNA-directed RNA polymerase RPB7 homolog family. In terms of assembly, part of the viral DNA-directed RNA polymerase that consists of 8 polII-like subunits (RPB1, RPB2, RPB3, RPB5, RPB6, RPB7, RPB9, RPB10), a capping enzyme and a termination factor.

The protein localises to the host cytoplasm. It is found in the virion. Component of the DNA-directed RNA polymerase (RNAP) that catalyzes the transcription in the cytoplasm of viral DNA into RNA using the four ribonucleoside triphosphates as substrates. This is DNA-directed RNA polymerase RPB7 homolog from Ornithodoros (relapsing fever ticks).